Here is a 62-residue protein sequence, read N- to C-terminus: UPF0291 protein CLK_1994 (62 aa).

This sequence belongs to the UPF0291 family.

It is found in the cytoplasm. The polypeptide is UPF0291 protein CLK_1994 (Clostridium botulinum (strain Loch Maree / Type A3)).